Reading from the N-terminus, the 814-residue chain is Coiled-coil and C2 domain-containing protein 1-like (814 aa).

Basic and acidic residues predominate over residues 1–11 (MFAKRKPEPAK). Disordered regions lie at residues 1–136 (MFAK…TFLP) and 157–263 (EANA…RSRQ). A compositionally biased stretch (acidic residues) spans 25 to 47 (IPDDFDPTSGYGDDDGGDSDLEA). Over residues 73–85 (DLDKMIADSLRDV) the composition is skewed to basic and acidic residues. Composition is skewed to acidic residues over residues 86–100 (SDDD…DSDL) and 110–130 (LEEE…EEEP). The segment at 143 to 201 (LGIIKQRLEIYKQAEANAKASGDSGKARRFGRGLKTLQDLHKQAAAGKTINVDDIPPEV) is DM14 1. The segment covering 205–230 (PAGDPSPAADESPAPSTPVSQPTRVA) has biased composition (low complexity). A compositionally biased stretch (pro residues) spans 231-254 (PAPPTPTSPPAATPPPAPATPPNP). DM14 regions lie at residues 256–314 (VAQM…PPPP) and 358–416 (LEAL…PVPP). Residues 351–378 (AAAAESMLEALQRRLEKYKSVEAAAKAE) adopt a coiled-coil conformation. Pro residues predominate over residues 414–425 (VPPGFGPLPSTE). The disordered stretch occupies residues 414 to 486 (VPPGFGPLPS…LTTRVTGNHQ (73 aa)). Residues 426 to 462 (PAPAATPSLPTSPTSPPATASTSAGGTPSGSSATTPT) show a composition bias toward low complexity. The span at 475-486 (TELTTRVTGNHQ) shows a compositional bias: polar residues. Residues 495 to 553 (MKLLLERQKEFKVAAIEAKKAGEIDQAKEYLKIYKGFDSLLNAASSGLPVDLSTLPVPP) form a DM14 4 region. Positions 633 to 772 (RKGQPLPKFH…ETKCDIHDTY (140 aa)) constitute a C2 domain.

Belongs to the CC2D1 family. Interacts (via DM14 domains 1 and 3) with shrb; the interaction is direct and blocks access to the surface involved in shrb polymerization. This interaction may be required for the ESCRT-III complex role in multivesicular body formation.

The protein localises to the cytoplasm. It localises to the cytosol. The protein resides in the apicolateral cell membrane. It is found in the cell cortex. Its subcellular location is the endosome. Its function is as follows. Phosphatidyl inositol monophosphate binding protein involved in endosomal protein sorting through regulation of the endosomal sorting required for transport (ESCRT) pathway. Required for full activity of the ESCRT-III complex core component shrb/shrub, probably by preventing its inappropriate polymerisation. Required, but not essential, for the efficient generation of intraluminal vesicles (ILVs) in multivesicular bodies (MVBs). Involved in a late stage of the endosomal pathway targeting transmembrane proteins of the plasma membrane for lysosomal degradation. Plays a critical role in regulation of multiple signal transduction pathways, including the Notch and BMP/decapentaplegic (dpp) signaling pathways, through targeting of membrane bound receptors to multivesicular bodies, isolating them from the cytoplasm and targeting them for lysosomal degradation. Involved in targeting N/Notch for endosomal degradation, negatively regulating the Notch signaling pathway. Regulates Notch signaling in imaginal disk cells and follicle cells during oogenesis and multiple developmental processes, including development of wings, veins, legs, eyes and bristles. Restricts the activity of Notch to the dorsoventral (D/V) boundary of the wing imaginal disk. In external sensory organ development regulates Notch signaling during asymmetric cell division and differentiation of sensory organ precursor cells. May be involved in regulation of apoptosis and cell growth independent of Notch signaling. Involved in targeting tkv for endosomal degradation, negatively regulating the BMP/decapentaplegic (dpp) signaling pathway. Regulates the BMP/dpp signaling pathway in follicle cells during oogenesis, but not in imaginal disk cells during wing development. May be involved in differentiation or morphogenesis of peripodial epithelial cells in the developing imaginal disk. Involved in abscission of germline cells during oogenesis. This chain is Coiled-coil and C2 domain-containing protein 1-like, found in Drosophila pseudoobscura pseudoobscura (Fruit fly).